A 292-amino-acid chain; its full sequence is Diaminopimelate epimerase (292 aa).

3 residues coordinate substrate: Asn-13, Gln-46, and Asn-66. The active-site Proton donor is the Cys-75. Substrate-binding positions include 76–77 (GN), Asn-166, Asn-199, and 217–218 (ER). Cys-226 functions as the Proton acceptor in the catalytic mechanism. 227-228 (GT) contributes to the substrate binding site.

This sequence belongs to the diaminopimelate epimerase family. In terms of assembly, homodimer.

It is found in the cytoplasm. The catalysed reaction is (2S,6S)-2,6-diaminopimelate = meso-2,6-diaminopimelate. It functions in the pathway amino-acid biosynthesis; L-lysine biosynthesis via DAP pathway; DL-2,6-diaminopimelate from LL-2,6-diaminopimelate: step 1/1. In terms of biological role, catalyzes the stereoinversion of LL-2,6-diaminopimelate (L,L-DAP) to meso-diaminopimelate (meso-DAP), a precursor of L-lysine and an essential component of the bacterial peptidoglycan. In Ralstonia nicotianae (strain ATCC BAA-1114 / GMI1000) (Ralstonia solanacearum), this protein is Diaminopimelate epimerase.